Consider the following 185-residue polypeptide: Elongation factor P (185 aa).

It belongs to the elongation factor P family.

It is found in the cytoplasm. Its pathway is protein biosynthesis; polypeptide chain elongation. Involved in peptide bond synthesis. Stimulates efficient translation and peptide-bond synthesis on native or reconstituted 70S ribosomes in vitro. Probably functions indirectly by altering the affinity of the ribosome for aminoacyl-tRNA, thus increasing their reactivity as acceptors for peptidyl transferase. The chain is Elongation factor P from Nitrosomonas eutropha (strain DSM 101675 / C91 / Nm57).